Consider the following 342-residue polypeptide: Ferredoxin--NADP reductase (342 aa).

FAD contacts are provided by C17, D36, Q44, Y49, V89, F124, D289, and T330.

It belongs to the ferredoxin--NADP reductase type 2 family. In terms of assembly, homodimer. FAD serves as cofactor.

It catalyses the reaction 2 reduced [2Fe-2S]-[ferredoxin] + NADP(+) + H(+) = 2 oxidized [2Fe-2S]-[ferredoxin] + NADPH. The protein is Ferredoxin--NADP reductase of Bradyrhizobium diazoefficiens (strain JCM 10833 / BCRC 13528 / IAM 13628 / NBRC 14792 / USDA 110).